The primary structure comprises 244 residues: 5-oxoprolinase subunit A (244 aa).

Belongs to the LamB/PxpA family. Forms a complex composed of PxpA, PxpB and PxpC.

The enzyme catalyses 5-oxo-L-proline + ATP + 2 H2O = L-glutamate + ADP + phosphate + H(+). Its function is as follows. Catalyzes the cleavage of 5-oxoproline to form L-glutamate coupled to the hydrolysis of ATP to ADP and inorganic phosphate. The sequence is that of 5-oxoprolinase subunit A from Shigella dysenteriae serotype 1 (strain Sd197).